Here is a 320-residue protein sequence, read N- to C-terminus: GTPase Era (320 aa).

The Era-type G domain occupies 25-193 (HCGFIAIVGR…RKHVRDHLPK (169 aa)). The G1 stretch occupies residues 33–40 (GRPNVGKS). 33 to 40 (GRPNVGKS) is a binding site for GTP. Residues 59–63 (QTTRH) form a G2 region. A G3 region spans residues 80–83 (DTPG). GTP is bound by residues 80-84 (DTPGL) and 142-145 (NKVD). A G4 region spans residues 142 to 145 (NKVD). The tract at residues 172-174 (ISA) is G5. The region spanning 216 to 302 (VREKLMRFTG…YLETWVKVKS (87 aa)) is the KH type-2 domain.

This sequence belongs to the TRAFAC class TrmE-Era-EngA-EngB-Septin-like GTPase superfamily. Era GTPase family. Monomer.

Its subcellular location is the cytoplasm. The protein resides in the cell inner membrane. An essential GTPase that binds both GDP and GTP, with rapid nucleotide exchange. Plays a role in 16S rRNA processing and 30S ribosomal subunit biogenesis and possibly also in cell cycle regulation and energy metabolism. This chain is GTPase Era, found in Vibrio vulnificus (strain CMCP6).